The following is a 166-amino-acid chain: Regulatory protein RecX (166 aa).

This sequence belongs to the RecX family.

Its subcellular location is the cytoplasm. Functionally, modulates RecA activity. In Escherichia coli (strain SMS-3-5 / SECEC), this protein is Regulatory protein RecX.